A 149-amino-acid chain; its full sequence is Putative pre-16S rRNA nuclease (149 aa).

The protein belongs to the YqgF nuclease family.

It localises to the cytoplasm. Functionally, could be a nuclease involved in processing of the 5'-end of pre-16S rRNA. In Burkholderia ambifaria (strain MC40-6), this protein is Putative pre-16S rRNA nuclease.